The chain runs to 204 residues: Cell wall protein RHD3 (204 aa).

The signal sequence occupies residues 1–15 (MKFLAILSLSSSALA). Gly182 carries the GPI-anchor amidated glycine lipid modification. Residues 183–204 (AAGQNKLSYGVGMAAVVAGLVM) constitute a propeptide, removed in mature form.

This sequence belongs to the SRP1/TIP1 family. The GPI-anchor is attached to the protein in the endoplasmic reticulum and serves to target the protein to the cell surface. There, the glucosamine-inositol phospholipid moiety is cleaved off and the GPI-modified mannoprotein is covalently attached via its lipidless GPI glycan remnant to the 1,6-beta-glucan of the outer cell wall layer. In terms of processing, O-glycosylated by PMT1.

It is found in the secreted. The protein resides in the cell wall. The protein localises to the membrane. Functionally, component of the cell wall involved in virulence. Does not seem to have a major role in maintaining cell wall integrity but plays a role in the relationship between C.albicans and the host. This is Cell wall protein RHD3 (RHD3) from Candida albicans (strain SC5314 / ATCC MYA-2876) (Yeast).